The sequence spans 346 residues: MSEQKDMYVLGIETSCDETAAAIVKNGKEIISNVVASQIESHKRFGGVVPEIASRHHVEQITLVIEEAFRKAGMTYSDIDAIAVTEGPGLVGALLIGVNAAKALSFAYNIPLVGVHHIAGHIYANRLVEDIVFPALALVVSGGHTELVYMKEHGSFEVIGETLDDAAGEAYDKVARTMGLPYPGGPQIDKLAEKGNDNIPLPRAWLEEGSYNFSFSGLKSAVINTLHNASQKGQEIAPEDLSASFQNSVIDVLVTKTARAAKEYDVKQVLLAGGVAANRGLRAALEKEFAQHEGITLVIPPLALCTDNAAMIAAAGTIAFEKGIRGAYDMNGQPGLELTSYQSLTR.

Fe cation contacts are provided by His117 and His121. Residues 139 to 143 (VVSGG), Asp172, Gly185, Asp189, and Asn278 contribute to the substrate site. Asp307 lines the Fe cation pocket.

It belongs to the KAE1 / TsaD family. In terms of assembly, may form a heterodimer with TsaB. It depends on Fe(2+) as a cofactor.

The protein localises to the cytoplasm. The catalysed reaction is L-threonylcarbamoyladenylate + adenosine(37) in tRNA = N(6)-L-threonylcarbamoyladenosine(37) in tRNA + AMP + H(+). In terms of biological role, required for the formation of a threonylcarbamoyl group on adenosine at position 37 (t(6)A37) in tRNAs that read codons beginning with adenine. Is involved in the transfer of the threonylcarbamoyl moiety of threonylcarbamoyl-AMP (TC-AMP) to the N6 group of A37, together with TsaE and TsaB; this reaction does not require ATP in vitro. TsaD likely plays a direct catalytic role in this reaction. This Bacillus subtilis (strain 168) protein is tRNA N6-adenosine threonylcarbamoyltransferase.